A 256-amino-acid polypeptide reads, in one-letter code: Inositol-1-monophosphatase (256 aa).

Mg(2+) is bound by residues Glu60, Asp77, Leu79, and Asp80. Residue Glu60 coordinates substrate. Substrate is bound by residues 79–82, Arg178, and Asp207; that span reads LDGT. Residue Asp207 participates in Mg(2+) binding.

This sequence belongs to the inositol monophosphatase superfamily. The cofactor is Mg(2+).

It carries out the reaction a myo-inositol phosphate + H2O = myo-inositol + phosphate. This Caulobacter vibrioides (strain ATCC 19089 / CIP 103742 / CB 15) (Caulobacter crescentus) protein is Inositol-1-monophosphatase (suhB).